Consider the following 357-residue polypeptide: Homoarginine-6-hydroxylase 2-ODD-C23.2 (357 aa).

One can recognise a Fe2OG dioxygenase domain in the interval proline 208–threonine 308. Residues histidine 231, aspartate 233, and histidine 289 each coordinate Fe cation. Arginine 299 contributes to the 2-oxoglutarate binding site.

Belongs to the iron/ascorbate-dependent oxidoreductase family. It depends on Fe(2+) as a cofactor. As to expression, expressed in senescent leaves.

It is found in the cytoplasm. It localises to the cytosol. The enzyme catalyses L-homoarginine + 2-oxoglutarate + O2 = 6-hydroxy-L-homoarginine + succinate + CO2. It catalyses the reaction L-arginine + 2-oxoglutarate + O2 = 5-hydroxy-L-arginine + succinate + CO2. Slightly inhibited by canavanine (Can), the 5-oxa-analog of arginine. 2-oxoglutarate-dependent dioxygenase catalyzing homoarginine 6-hydroxylation and arginine-5-hydroxylation thus producing 6-hydroxy-L-homoarginine and 5-hydroxy-L-arginine, respectively. Guanidine (Gd) is in turn synthesized by the spontaneous conversion of 6-hydroxy-L-homoarginine and 5-hydroxy-L-arginine to (S)-2-amino-6-oxohexanoate (RHEA:79843) and L-glutamate 5-semialdehyde (RHEA:31527); guanidine is a nitrogen-rich compound that may serve as a defense or signaling substance. This Arabidopsis thaliana (Mouse-ear cress) protein is Homoarginine-6-hydroxylase 2-ODD-C23.2.